The chain runs to 528 residues: Cytochrome P450 monooxygenase lenC (528 aa).

The chain crosses the membrane as a helical span at residues 5–27; sequence FVLPHPASMGASCILGLLLLTIL. Cys-469 is a binding site for heme.

It belongs to the cytochrome P450 family. Requires heme as cofactor.

It localises to the membrane. It participates in alkaloid biosynthesis. Nonribosomal peptide synthetase; part of the gene cluster that mediates the biosynthesis of the ergot alkaloids lentopeptins A and B. Within the pathway, lenC catalyzes the post-NRPS oxidative modification steps using as substrate the N-acyldiketopiperazine intermediate produced by the NRPS lenA. Lentopeptin A forms via a stereospecific hydroxylation, followed by a spontaneous bicyclic lactam core formation, while lentopeptin B is produced through an initial dehydrogenation, followed by a bicyclic lactam core formation and stereospecific hydration. The phenylalanine ammonia-lyase lenB provides the cinnamic acid starter unit to the NRPS lenA for the synthesis of the N-acyldiketopiperazine intermediate which in turn is converted into lentopeptins A and B by lenC. This is Cytochrome P450 monooxygenase lenC from Aspergillus lentulus.